The chain runs to 164 residues: UPF0114 protein YqhA (164 aa).

The next 3 helical transmembrane spans lie at 15 to 35, 53 to 73, and 136 to 156; these read LLAP…LKFF, LILV…LVMV, and LMWY…MGYL.

It belongs to the UPF0114 family.

The protein localises to the cell membrane. The chain is UPF0114 protein YqhA from Salmonella agona (strain SL483).